A 553-amino-acid chain; its full sequence is Nucleoside-diphosphatase mig-23 (553 aa).

The Cytoplasmic segment spans residues 1-8 (MRVSRRFT). A helical membrane pass occupies residues 9-29 (ILAITAMIFLSLIICIYAVAA). The Lumenal segment spans residues 30-489 (HTTVNVILQK…IVKETHSASE (460 aa)). E174 functions as the Proton acceptor in the catalytic mechanism. N-linked (GlcNAc...) asparagine glycosylation is found at N190 and N284. The helical transmembrane segment at 490 to 510 (SLWAPLFFLSAVFCLFVLVCA) threads the bilayer. Residues 511 to 553 (KEHSLLCFDDKRRASFGLTRRQYSYKMLKEDRTSSSAFLENFA) are Cytoplasmic-facing.

The protein belongs to the GDA1/CD39 NTPase family.

The protein localises to the golgi apparatus membrane. It catalyses the reaction a ribonucleoside 5'-diphosphate + H2O = a ribonucleoside 5'-phosphate + phosphate + H(+). Its function is as follows. Seems to be able to hydrolyze ADP, UDP and GDP. Supports mig-17 glycosylation and surface expression, which is required for proper migration of distal tip cells during gonad morphogenesis. This Caenorhabditis briggsae protein is Nucleoside-diphosphatase mig-23.